A 501-amino-acid polypeptide reads, in one-letter code: MLTPRVLRALGWTGLFFLLLSPSNVLGASLSRDLETPPFLSFDPSNISINGAPLTEVPHAPSTESVSTNSESTNEHTITETTGKNAYIHNNASTDKQNANDTHKTPNILCDTEEVFVFLNETGRFVCTLKVDPPSDSEWSNFVLDLIFNPIEYHANEKNVEAARIAGLYGVPGSDYAYPRQSELISSIRRDPQGTFWTSPSPHGNKYFIWINKTTNTMGVEIRNVDYADNGYMQVIMRDHFNRPLIDKHIYIRVCQRPASVDVLAPPVLSGENYKASCIVRHFYPPGSVYVSWRQNGNIATPRKDRDGSFWWFESGRGATLVSTITLGNSGIDFPPKISCLVAWKQGDMISTTNATAIPTVYHHPRLSLAFKDGYAICTIECVPSEITVRWLVHDEAQPNTTYNTVVTGLCRTIDRHRNLLSRIPVWDNWTKTKYTCRLIGYPFDEDKFQDSEYYDATPSARGTPMVITVTAVLGLAVILGMGIIMTALCLYNSTRKNIRL.

An N-terminal signal peptide occupies residues 1-27 (MLTPRVLRALGWTGLFFLLLSPSNVLG). Residues 28–465 (ASLSRDLETP…DATPSARGTP (438 aa)) lie on the Virion surface side of the membrane. An N-linked (GlcNAc...) asparagine; by host glycan is attached at Asn46. The disordered stretch occupies residues 53 to 86 (PLTEVPHAPSTESVSTNSESTNEHTITETTGKNA). Positions 62–72 (STESVSTNSES) are enriched in low complexity. Asn91, Asn100, Asn120, Asn212, Asn354, Asn400, and Asn429 each carry an N-linked (GlcNAc...) asparagine; by host glycan. An Ig-like domain is found at 258–356 (PASVDVLAPP…GDMISTTNAT (99 aa)). Residues 466 to 492 (MVITVTAVLGLAVILGMGIIMTALCLY) traverse the membrane as a helical segment. Topologically, residues 493-501 (NSTRKNIRL) are cytoplasmic.

This sequence belongs to the herpesviridae glycoprotein C family.

It localises to the secreted. The protein resides in the host cell membrane. Its function is as follows. May play an immunoevasive role in the pathogenesis of Marek's disease. It is a candidate for causing the early-stage immunosuppression that occurs after MDHV infection. The protein is Envelope glycoprotein C homolog (gC) of Gallus gallus (Chicken).